The sequence spans 358 residues: Photosystem II protein D1 (358 aa).

The next 3 membrane-spanning stretches (helical) occupy residues 28–45, 117–132, and 141–155; these read YVGW…AAAI, HFLI…QWEL, and WICV…AAFA. His117 contributes to the chlorophyll a binding site. Trp125 contacts pheophytin a. [CaMn4O5] cluster is bound by residues Asp169 and Glu188. The chain crosses the membrane as a helical span at residues 196-217; it reads FHMIGVAGMFGGSLFSAMHGSL. Residue His197 coordinates chlorophyll a. A quinone contacts are provided by residues His214 and 263-264; that span reads SF. Residue His214 coordinates Fe cation. Position 271 (His271) interacts with Fe cation. The chain crosses the membrane as a helical span at residues 273 to 287; that stretch reads FLAAWPVICIWITSL. The [CaMn4O5] cluster site is built by His331, Glu332, Asp341, and Ala343. The propeptide occupies 344-358; it reads AAESTPVALIAPAIG.

This sequence belongs to the reaction center PufL/M/PsbA/D family. As to quaternary structure, PSII is composed of 1 copy each of membrane proteins PsbA, PsbB, PsbC, PsbD, PsbE, PsbF, PsbH, PsbI, PsbJ, PsbK, PsbL, PsbM, PsbT, PsbX, PsbY, Psb30/Ycf12, peripheral proteins PsbO, CyanoQ (PsbQ), PsbU, PsbV and a large number of cofactors. It forms dimeric complexes. The D1/D2 heterodimer binds P680, chlorophylls that are the primary electron donor of PSII, and subsequent electron acceptors. It shares a non-heme iron and each subunit binds pheophytin, quinone, additional chlorophylls, carotenoids and lipids. D1 provides most of the ligands for the Mn4-Ca-O5 cluster of the oxygen-evolving complex (OEC). There is also a Cl(-1) ion associated with D1 and D2, which is required for oxygen evolution. The PSII complex binds additional chlorophylls, carotenoids and specific lipids. is required as a cofactor. In terms of processing, tyr-160 forms a radical intermediate that is referred to as redox-active TyrZ, YZ or Y-Z. C-terminally processed by CtpA; processing is essential to allow assembly of the oxygen-evolving complex and thus photosynthetic growth.

The protein resides in the cellular thylakoid membrane. It catalyses the reaction 2 a plastoquinone + 4 hnu + 2 H2O = 2 a plastoquinol + O2. Its function is as follows. Photosystem II (PSII) is a light-driven water:plastoquinone oxidoreductase that uses light energy to abstract electrons from H(2)O, generating O(2) and a proton gradient subsequently used for ATP formation. It consists of a core antenna complex that captures photons, and an electron transfer chain that converts photonic excitation into a charge separation. The D1/D2 (PsbA/PsbD) reaction center heterodimer binds P680, the primary electron donor of PSII as well as several subsequent electron acceptors. This Prochlorococcus marinus (strain MIT 9313) protein is Photosystem II protein D1.